We begin with the raw amino-acid sequence, 144 residues long: Large ribosomal subunit protein uL15 (144 aa).

Positions M1–E51 are disordered. Positions R21–G31 are enriched in gly residues. The span at G32–R47 shows a compositional bias: basic residues.

It belongs to the universal ribosomal protein uL15 family. In terms of assembly, part of the 50S ribosomal subunit.

Functionally, binds to the 23S rRNA. The chain is Large ribosomal subunit protein uL15 from Actinobacillus succinogenes (strain ATCC 55618 / DSM 22257 / CCUG 43843 / 130Z).